The sequence spans 85 residues: Large ribosomal subunit protein bL27 (85 aa).

A disordered region spans residues 1 to 20 (MAHKKAGGSTRNGRDSEAKR).

It belongs to the bacterial ribosomal protein bL27 family.

This Salmonella agona (strain SL483) protein is Large ribosomal subunit protein bL27.